The sequence spans 610 residues: Elongation factor 4 (610 aa).

The tr-type G domain maps to 11 to 193; sequence QRIRNFSIVA…KIVQDIPAPT (183 aa). GTP is bound by residues 23-28 and 140-143; these read DHGKST and NKVD.

It belongs to the TRAFAC class translation factor GTPase superfamily. Classic translation factor GTPase family. LepA subfamily.

It is found in the cell membrane. The enzyme catalyses GTP + H2O = GDP + phosphate + H(+). Required for accurate and efficient protein synthesis under certain stress conditions. May act as a fidelity factor of the translation reaction, by catalyzing a one-codon backward translocation of tRNAs on improperly translocated ribosomes. Back-translocation proceeds from a post-translocation (POST) complex to a pre-translocation (PRE) complex, thus giving elongation factor G a second chance to translocate the tRNAs correctly. Binds to ribosomes in a GTP-dependent manner. The chain is Elongation factor 4 from Limosilactobacillus fermentum (strain NBRC 3956 / LMG 18251) (Lactobacillus fermentum).